A 147-amino-acid chain; its full sequence is Hemoglobin subunit beta (147 aa).

Residue Val2 is modified to N-acetylvaline. In terms of domain architecture, Globin spans 3-147 (HLTGEEKAAV…VANALAHKYH (145 aa)). The residue at position 13 (Thr13) is a Phosphothreonine. Phosphoserine is present on Ser45. An N6-acetyllysine modification is found at Lys60. Position 64 (His64) interacts with heme b. At Lys83 the chain carries N6-acetyllysine. A heme b-binding site is contributed by His93. Cys94 is modified (S-nitrosocysteine). Position 145 is an N6-acetyllysine (Lys145).

Belongs to the globin family. In terms of assembly, heterotetramer of two alpha chains and two beta chains. As to expression, red blood cells.

In terms of biological role, involved in oxygen transport from the lung to the various peripheral tissues. The chain is Hemoglobin subunit beta (HBB) from Aotus azarae (Azara's night monkey).